The primary structure comprises 393 residues: Cytohesin-4 (393 aa).

Residues 13 to 56 (SGEAKELQQIKWHRKQLLEDIQKLKDEIADVFAQIDCFESTEES) adopt a coiled-coil conformation. An SEC7 domain is found at 54-241 (EESRMAQKEK…RNLFDSIKSE (188 aa)). The region spanning 259-375 (NPDREGWLLK…WIEAIRASIT (117 aa)) is the PH domain. Residues 268-275 (KLGGRVKT), Arg279, Tyr290, and Arg300 contribute to the a 1,2-diacyl-sn-glycero-3-phospho-(1D-myo-inositol-3,4,5-trisphosphate) site. Positions 386-393 (RKKKIVGK) are C-terminal autoinhibitory region.

Its subcellular location is the cell membrane. Promotes guanine-nucleotide exchange on ARF1 and ARF5. Promotes the activation of ARF factors through replacement of GDP with GTP. This Mus musculus (Mouse) protein is Cytohesin-4 (Cyth4).